Consider the following 267-residue polypeptide: Octanoyltransferase (267 aa).

In terms of domain architecture, BPL/LPL catalytic spans 77–265; the sequence is GTASELVWLV…AFESVFGPRQ (189 aa). Residues 116 to 123, 196 to 198, and 209 to 211 contribute to the substrate site; these read RGGEYTYH, AIG, and GIA. Residue Cys-227 is the Acyl-thioester intermediate of the active site.

Belongs to the LipB family.

The protein localises to the cytoplasm. The catalysed reaction is octanoyl-[ACP] + L-lysyl-[protein] = N(6)-octanoyl-L-lysyl-[protein] + holo-[ACP] + H(+). Its pathway is protein modification; protein lipoylation via endogenous pathway; protein N(6)-(lipoyl)lysine from octanoyl-[acyl-carrier-protein]: step 1/2. Its function is as follows. Catalyzes the transfer of endogenously produced octanoic acid from octanoyl-acyl-carrier-protein onto the lipoyl domains of lipoate-dependent enzymes. Lipoyl-ACP can also act as a substrate although octanoyl-ACP is likely to be the physiological substrate. The sequence is that of Octanoyltransferase from Brucella suis biovar 1 (strain 1330).